Here is a 521-residue protein sequence, read N- to C-terminus: GMP synthase [glutamine-hydrolyzing] (521 aa).

The Glutamine amidotransferase type-1 domain occupies 5–197 (KILILDFGSQ…VLDICGAQPG (193 aa)). The active-site Nucleophile is the Cys81. Residues His171 and Glu173 contribute to the active site. Residues 198-390 (WTMPNYIEEA…LGLPREMVYR (193 aa)) enclose the GMPS ATP-PPase domain. An ATP-binding site is contributed by 225–231 (SGGVDSS).

Homodimer.

The catalysed reaction is XMP + L-glutamine + ATP + H2O = GMP + L-glutamate + AMP + diphosphate + 2 H(+). It participates in purine metabolism; GMP biosynthesis; GMP from XMP (L-Gln route): step 1/1. Its function is as follows. Catalyzes the synthesis of GMP from XMP. This is GMP synthase [glutamine-hydrolyzing] (guaA) from Neisseria meningitidis serogroup A / serotype 4A (strain DSM 15465 / Z2491).